Reading from the N-terminus, the 219-residue chain is MRMRKKPWARPELEGCDFFVINPKEYKGKWKEFFGNDKPIYLELGCGKGTFMAVHASENPDINYIAIDIKDEVLGLAKRNIEKAYEEKNRKTDNVKLMAQEIGLISEILSEEDVVSRIYINFCNPWPKEKHKKRRLTHMRQLEQYKTFLKSEGEIYFKTDDDELFEESLEYFNEAGFRIKYITYDLHNSDVEGNVQTEHEKMFSEQGIKIKFLIAMKDN.

E43, D68, E101, and N124 together coordinate S-adenosyl-L-methionine. Residues K128 and D160 each contribute to the substrate site.

Belongs to the class I-like SAM-binding methyltransferase superfamily. TrmB family.

The enzyme catalyses guanosine(46) in tRNA + S-adenosyl-L-methionine = N(7)-methylguanosine(46) in tRNA + S-adenosyl-L-homocysteine. Its pathway is tRNA modification; N(7)-methylguanine-tRNA biosynthesis. Functionally, catalyzes the formation of N(7)-methylguanine at position 46 (m7G46) in tRNA. The sequence is that of tRNA (guanine-N(7)-)-methyltransferase from Clostridium beijerinckii (strain ATCC 51743 / NCIMB 8052) (Clostridium acetobutylicum).